Reading from the N-terminus, the 218-residue chain is tRNA (guanine-N(7)-)-methyltransferase (218 aa).

Glu46, Glu71, Asp98, and Asp120 together coordinate S-adenosyl-L-methionine. Asp120 is an active-site residue. Lys124 contacts substrate. The segment at 126–131 (RHEKRR) is interaction with RNA. Substrate contacts are provided by residues Asp156 and 196-199 (TEYE).

The protein belongs to the class I-like SAM-binding methyltransferase superfamily. TrmB family.

It catalyses the reaction guanosine(46) in tRNA + S-adenosyl-L-methionine = N(7)-methylguanosine(46) in tRNA + S-adenosyl-L-homocysteine. It participates in tRNA modification; N(7)-methylguanine-tRNA biosynthesis. In terms of biological role, catalyzes the formation of N(7)-methylguanine at position 46 (m7G46) in tRNA. This is tRNA (guanine-N(7)-)-methyltransferase from Lactobacillus johnsonii (strain CNCM I-12250 / La1 / NCC 533).